The chain runs to 339 residues: Phosphate acyltransferase (339 aa).

The protein belongs to the PlsX family. Homodimer. Probably interacts with PlsY.

Its subcellular location is the cytoplasm. It carries out the reaction a fatty acyl-[ACP] + phosphate = an acyl phosphate + holo-[ACP]. The protein operates within lipid metabolism; phospholipid metabolism. In terms of biological role, catalyzes the reversible formation of acyl-phosphate (acyl-PO(4)) from acyl-[acyl-carrier-protein] (acyl-ACP). This enzyme utilizes acyl-ACP as fatty acyl donor, but not acyl-CoA. The protein is Phosphate acyltransferase of Brachyspira hyodysenteriae (strain ATCC 49526 / WA1).